A 408-amino-acid chain; its full sequence is GTPase HflX (408 aa).

The region spanning 198-361 (PRVSLVGYTN…LIVREMERHY (164 aa)) is the Hflx-type G domain. GTP is bound by residues 204 to 211 (GYTNAGKS), 229 to 233 (FVTLD), 251 to 254 (DTVG), 317 to 320 (NKAD), and 339 to 341 (SAK). Mg(2+) contacts are provided by serine 211 and threonine 231.

Belongs to the TRAFAC class OBG-HflX-like GTPase superfamily. HflX GTPase family. Monomer. Associates with the 50S ribosomal subunit. Requires Mg(2+) as cofactor.

The protein localises to the cytoplasm. In terms of biological role, GTPase that associates with the 50S ribosomal subunit and may have a role during protein synthesis or ribosome biogenesis. The protein is GTPase HflX of Spirochaeta thermophila (strain ATCC 49972 / DSM 6192 / RI 19.B1).